A 339-amino-acid chain; its full sequence is Aspartate carbamoyltransferase catalytic subunit (339 aa).

Carbamoyl phosphate-binding residues include R59 and T60. Residue K87 participates in L-aspartate binding. Carbamoyl phosphate-binding residues include R109, H142, and Q145. Residues R182 and R253 each contribute to the L-aspartate site. G294 and P295 together coordinate carbamoyl phosphate.

Belongs to the aspartate/ornithine carbamoyltransferase superfamily. ATCase family. In terms of assembly, heterododecamer (2C3:3R2) of six catalytic PyrB chains organized as two trimers (C3), and six regulatory PyrI chains organized as three dimers (R2).

The enzyme catalyses carbamoyl phosphate + L-aspartate = N-carbamoyl-L-aspartate + phosphate + H(+). The protein operates within pyrimidine metabolism; UMP biosynthesis via de novo pathway; (S)-dihydroorotate from bicarbonate: step 2/3. Its function is as follows. Catalyzes the condensation of carbamoyl phosphate and aspartate to form carbamoyl aspartate and inorganic phosphate, the committed step in the de novo pyrimidine nucleotide biosynthesis pathway. In Prochlorococcus marinus (strain NATL1A), this protein is Aspartate carbamoyltransferase catalytic subunit.